A 263-amino-acid chain; its full sequence is 2-keto-4-pentenoate hydratase 1 (263 aa).

It belongs to the hydratase/decarboxylase family. MhpD subfamily. It depends on a divalent metal cation as a cofactor.

It catalyses the reaction (S)-4-hydroxy-2-oxopentanoate = (2Z)-2-hydroxypenta-2,4-dienoate + H2O. Its pathway is aromatic compound metabolism; 3-phenylpropanoate degradation. Its function is as follows. Catalyzes the conversion of 2-hydroxypentadienoic acid (enolic form of 2-oxopent-4-enoate) to 4-hydroxy-2-ketopentanoic acid. In Dechloromonas aromatica (strain RCB), this protein is 2-keto-4-pentenoate hydratase 1.